Consider the following 173-residue polypeptide: Probable DNA-directed RNA polymerase subunit delta (173 aa).

The HTH HARE-type domain occupies 14 to 81; the sequence is LSMIELGVKI…GSGMWGLKRW (68 aa). The disordered stretch occupies residues 86-173; it reads QAEEEITEEP…EDENDDDNTR (88 aa). Over residues 109 to 173 the composition is skewed to acidic residues; it reads IDDVDDDLDV…EDENDDDNTR (65 aa).

The protein belongs to the RpoE family. In terms of assembly, RNAP is composed of a core of 2 alpha, a beta and a beta' subunits. The core is associated with a delta subunit and one of several sigma factors.

In terms of biological role, participates in both the initiation and recycling phases of transcription. In the presence of the delta subunit, RNAP displays an increased specificity of transcription, a decreased affinity for nucleic acids, and an increased efficiency of RNA synthesis because of enhanced recycling. This Oceanobacillus iheyensis (strain DSM 14371 / CIP 107618 / JCM 11309 / KCTC 3954 / HTE831) protein is Probable DNA-directed RNA polymerase subunit delta.